A 478-amino-acid polypeptide reads, in one-letter code: Glycogen synthase (478 aa).

Lys15 contributes to the ADP-alpha-D-glucose binding site.

It belongs to the glycosyltransferase 1 family. Bacterial/plant glycogen synthase subfamily.

The catalysed reaction is [(1-&gt;4)-alpha-D-glucosyl](n) + ADP-alpha-D-glucose = [(1-&gt;4)-alpha-D-glucosyl](n+1) + ADP + H(+). It functions in the pathway glycan biosynthesis; glycogen biosynthesis. Its function is as follows. Synthesizes alpha-1,4-glucan chains using ADP-glucose. This Acholeplasma laidlawii (strain PG-8A) protein is Glycogen synthase.